The primary structure comprises 591 residues: Serine/threonine-protein kinase Nek2 (591 aa).

The 255-residue stretch at 4-258 (YEVLEQIGKG…AAQLLKHPQL (255 aa)) folds into the Protein kinase domain. ATP-binding positions include 10–18 (IGKGAFGSA) and lysine 33. Residue aspartate 129 is the Proton acceptor of the active site. Disordered regions lie at residues 309–331 (LGNERTVTFSKPSPERNSVSSTR), 382–408 (ARNQLEPPKTSYNRTYRSELPSKTTPN), and 500–534 (RTDGDNGSDSSGRNATAASSRGSNDSRQQRFDTSS). Polar residues-rich tracts occupy residues 391–408 (TSYNRTYRSELPSKTTPN) and 504–534 (DNGSDSSGRNATAASSRGSNDSRQQRFDTSS).

This sequence belongs to the protein kinase superfamily. NEK Ser/Thr protein kinase family. NIMA subfamily. Expressed in anthers, pistils and leaves.

The catalysed reaction is L-seryl-[protein] + ATP = O-phospho-L-seryl-[protein] + ADP + H(+). The enzyme catalyses L-threonyl-[protein] + ATP = O-phospho-L-threonyl-[protein] + ADP + H(+). Its function is as follows. May be involved in plant development processes. This is Serine/threonine-protein kinase Nek2 from Oryza sativa subsp. japonica (Rice).